We begin with the raw amino-acid sequence, 340 residues long: MAPSLEEPTQIDFNAPLKAAPKLVAPEPEHCPGPESQQAGTADNCAGCPNQAICASAPKGPDPDIPLITARLSSVKHKILVLSGKGGVGKSTFSTMLSHGFSANPDSTVGLMDTDICGPSIPKMMGVEEETIHTTADGWEPVWVSENLGVMSVQFMLPNRDDAVIWRGPKKNGLIKKFLMDVKWGELDFLIVDTPPGTSDEHLSVNSFLKASGVDGAVLVTTPQEVALLDVRKEIDFCRKASIPILGIVENMSGFVCPGCKHESQIFRASTGGARKLAKEENIPFLGAVPLDPRIGMACDYGESFLTAYPDSPACAAIRDVVRRVGVEMGLEADEVLPEE.

4 residues coordinate [4Fe-4S] cluster: Cys-31, Cys-45, Cys-48, and Cys-54. 84–91 (GKGGVGKS) lines the ATP pocket. [4Fe-4S] cluster is bound by residues Cys-257 and Cys-260.

The protein belongs to the Mrp/NBP35 ATP-binding proteins family. NUBP1/NBP35 subfamily. Heterotetramer of 2 NBP35 and 2 CFD1 chains. [4Fe-4S] cluster serves as cofactor.

It is found in the cytoplasm. Its function is as follows. Component of the cytosolic iron-sulfur (Fe/S) protein assembly (CIA) machinery. Required for maturation of extramitochondrial Fe-S proteins. The NBP35-CFD1 heterotetramer forms a Fe-S scaffold complex, mediating the de novo assembly of an Fe-S cluster and its transfer to target apoproteins. This chain is Cytosolic Fe-S cluster assembly factor NBP35, found in Phaeosphaeria nodorum (strain SN15 / ATCC MYA-4574 / FGSC 10173) (Glume blotch fungus).